A 292-amino-acid chain; its full sequence is 2-(5''-triphosphoribosyl)-3'-dephosphocoenzyme-A synthase (292 aa).

It belongs to the CitG/MdcB family.

It carries out the reaction 3'-dephospho-CoA + ATP = 2'-(5''-triphospho-alpha-D-ribosyl)-3'-dephospho-CoA + adenine. Catalyzes the formation of 2-(5''-triphosphoribosyl)-3'-dephosphocoenzyme-A, the precursor of the prosthetic group of the holo-acyl carrier protein (gamma chain) of citrate lyase, from ATP and dephospho-CoA. The polypeptide is 2-(5''-triphosphoribosyl)-3'-dephosphocoenzyme-A synthase (Escherichia coli (strain UTI89 / UPEC)).